The chain runs to 170 residues: CCHC-type zinc finger nucleic acid binding protein (170 aa).

N-acetylserine is present on S2. Residues 4–21 (NECFKCGRSGHWARECPT) form a CCHC-type 1 zinc finger. K8 is subject to N6-acetyllysine. Omega-N-methylarginine; by PRMT1 occurs at positions 25 and 27. Residues 25–33 (RGRGMRSRG) form an RNA-binding Arg/Gly-rich region (RGG-box) region. Phosphoserine is present on S42. 6 consecutive CCHC-type zinc fingers follow at residues 45 to 62 (DICY…DCDL), 65 to 82 (DACY…DCKE), 89 to 106 (QCCY…DCDH), 110 to 127 (QKCY…DCTK), 128 to 145 (VKCY…NCSK), and 149 to 166 (VNCY…ECTI). The residue at position 72 (R72) is an Omega-N-methylarginine.

In terms of assembly, associates with the 40S ribosomal subunit, the 80S ribosome and with polysomes. Arginine methylation by PRMT1 in the Arg/Gly-rich region impedes RNA binding.

The protein localises to the nucleus. Its subcellular location is the cytoplasm. It localises to the endoplasmic reticulum. Its function is as follows. Single-stranded DNA-binding protein that preferentially binds to the sterol regulatory element (SRE) sequence 5'-GTGCGGTG-3', and thereby mediates transcriptional repression. Has a role as transactivator of the Myc promoter. Binds single-stranded RNA in a sequence-specific manner. Binds G-rich elements in target mRNA coding sequences. Prevents G-quadruplex structure formation in vitro, suggesting a role in supporting translation by resolving stable structures on mRNAs. This Bos taurus (Bovine) protein is CCHC-type zinc finger nucleic acid binding protein (CNBP).